The primary structure comprises 942 residues: Lon protease homolog 4, chloroplastic/mitochondrial (942 aa).

Position 54 is a phosphoserine (Ser54). Residues 79 to 301 enclose the Lon N-terminal domain; the sequence is VIALPLPHKP…LTLELVKKEV (223 aa). 456 to 463 lines the ATP pocket; sequence GPTGVGKT. A disordered region spans residues 673–725; that stretch reads ISDDVTTDTEETKSLAKTDLESPETSAEGSTVLTDELATGDPTESTTEQSGEV. Residues 682 to 692 are compositionally biased toward basic and acidic residues; the sequence is EETKSLAKTDL. A compositionally biased stretch (polar residues) spans 695–705; it reads PETSAEGSTVL. Residues 756–940 form the Lon proteolytic domain; the sequence is QTPVGVVMGL…EQIFELAFGY (185 aa). Active-site residues include Ser846 and Lys889.

It belongs to the peptidase S16 family. In terms of assembly, homohexamer or homoheptamer. Organized in a ring with a central cavity.

Its subcellular location is the mitochondrion matrix. The protein localises to the plastid. The protein resides in the chloroplast thylakoid membrane. The catalysed reaction is Hydrolysis of proteins in presence of ATP.. Functionally, ATP-dependent serine protease that mediates the selective degradation of misfolded, unassembled or oxidatively damaged polypeptides as well as certain short-lived regulatory proteins in the mitochondrial matrix. May also have a chaperone function in the assembly of inner membrane protein complexes. Participates in the regulation of mitochondrial gene expression and in the maintenance of the integrity of the mitochondrial genome. Binds to mitochondrial DNA in a site-specific manner. This Arabidopsis thaliana (Mouse-ear cress) protein is Lon protease homolog 4, chloroplastic/mitochondrial (LON4).